A 439-amino-acid polypeptide reads, in one-letter code: GTPase Obg (439 aa).

Residues 1–159 (MAFVDQAEIE…RKLKLELKVL (159 aa)) form the Obg domain. The OBG-type G domain maps to 160 to 336 (ADVGLVGFPS…LMRLTADLLA (177 aa)). GTP is bound by residues 166-173 (GFPSAGKS), 191-195 (FTTLS), 213-216 (DLPG), 283-286 (TKMD), and 317-319 (SAL). Residues Ser173 and Thr193 each contribute to the Mg(2+) site. One can recognise an OCT domain in the interval 358–439 (DFKPEQHNFT…NSDFVFEFSD (82 aa)).

The protein belongs to the TRAFAC class OBG-HflX-like GTPase superfamily. OBG GTPase family. In terms of assembly, monomer. It depends on Mg(2+) as a cofactor.

The protein resides in the cytoplasm. In terms of biological role, an essential GTPase which binds GTP, GDP and possibly (p)ppGpp with moderate affinity, with high nucleotide exchange rates and a fairly low GTP hydrolysis rate. Plays a role in control of the cell cycle, stress response, ribosome biogenesis and in those bacteria that undergo differentiation, in morphogenesis control. This chain is GTPase Obg, found in Leuconostoc citreum (strain KM20).